A 686-amino-acid chain; its full sequence is Bromodomain-containing factor 1 (686 aa).

Disordered stretches follow at residues 1–69 (MTDI…PAGL) and 85–150 (NGYN…NPIP). Residues 9–25 (NDVDVNGNNVNDDVSSN) show a composition bias toward low complexity. Positions 99–120 (QGLKKEEGGQGTKQEDLDENSK) are enriched in basic and acidic residues. Pro residues predominate over residues 130-139 (EPAPAPPPEP). A Bromo 1 domain is found at 145-254 (PQNPIPKHQQ…ASFEKHMLNM (110 aa)). Serine 270 carries the phosphoserine modification. The disordered stretch occupies residues 283-304 (QTHNGRPKRTIHPPKSKDIYPY). The segment covering 287–296 (GRPKRTIHPP) has biased composition (basic residues). One can recognise a Bromo 2 domain in the interval 312 to 421 (KRLQQAMKFC…EVFNSKWADR (110 aa)). 4 disordered regions span residues 424-447 (LDDY…SEYS), 486-523 (IRKE…KKNK), 594-636 (SSGA…EQSR), and 649-686 (DSAS…SEEE). Serine 429 bears the Phosphoserine mark. Positions 438–447 (DYDDYESEYS) are enriched in acidic residues. The stretch at 460-499 (AIQYLEEQLARMKVELQQLKKQELEKIRKERRLARGSKKR) forms a coiled coil. The segment covering 488–507 (KERRLARGSKKRGKRSKGRS) has biased composition (basic residues). The region spanning 518–598 (RDKKNKLKTV…RQYESSSGAS (81 aa)) is the NET domain. Composition is skewed to polar residues over residues 594–620 (SSGA…TSAG) and 652–671 (SPLS…HNGF). 2 positions are modified to phosphoserine: serine 615 and serine 659. The span at 675–686 (SDDDVSSESEEE) shows a compositional bias: acidic residues.

Belongs to the BET family. In terms of assembly, interacts with the TFIID subunit TAF7 and with acetylated histones H3 and H4. Phosphorylated by the casein kinase CK2 complex.

It localises to the nucleus. In terms of biological role, transcription factor involved in the expression of a broad class of genes including snRNAs. Required for sporulation and DNA-damage repair. Prevents the spreading of SIR silencing at telomeres and protects histone H4, but not H3, from deacetylation. This chain is Bromodomain-containing factor 1 (BDF1), found in Saccharomyces cerevisiae (strain ATCC 204508 / S288c) (Baker's yeast).